Here is a 130-residue protein sequence, read N- to C-terminus: Small ribosomal subunit protein uS8 (130 aa).

This sequence belongs to the universal ribosomal protein uS8 family.

The protein is Small ribosomal subunit protein uS8 (RPS22A) of Eremothecium gossypii (strain ATCC 10895 / CBS 109.51 / FGSC 9923 / NRRL Y-1056) (Yeast).